Reading from the N-terminus, the 248-residue chain is Pyridoxine 5'-phosphate synthase (248 aa).

Residue Asn7 coordinates 3-amino-2-oxopropyl phosphate. 9 to 10 provides a ligand contact to 1-deoxy-D-xylulose 5-phosphate; the sequence is DH. Arg18 lines the 3-amino-2-oxopropyl phosphate pocket. Catalysis depends on His43, which acts as the Proton acceptor. Residues Arg45 and His50 each coordinate 1-deoxy-D-xylulose 5-phosphate. Glu70 serves as the catalytic Proton acceptor. Residue Thr100 coordinates 1-deoxy-D-xylulose 5-phosphate. His191 functions as the Proton donor in the catalytic mechanism. 3-amino-2-oxopropyl phosphate is bound by residues Gly192 and 213-214; that span reads GH.

Belongs to the PNP synthase family. As to quaternary structure, homooctamer; tetramer of dimers.

It is found in the cytoplasm. The enzyme catalyses 3-amino-2-oxopropyl phosphate + 1-deoxy-D-xylulose 5-phosphate = pyridoxine 5'-phosphate + phosphate + 2 H2O + H(+). Its pathway is cofactor biosynthesis; pyridoxine 5'-phosphate biosynthesis; pyridoxine 5'-phosphate from D-erythrose 4-phosphate: step 5/5. Its function is as follows. Catalyzes the complicated ring closure reaction between the two acyclic compounds 1-deoxy-D-xylulose-5-phosphate (DXP) and 3-amino-2-oxopropyl phosphate (1-amino-acetone-3-phosphate or AAP) to form pyridoxine 5'-phosphate (PNP) and inorganic phosphate. This chain is Pyridoxine 5'-phosphate synthase, found in Bordetella bronchiseptica (strain ATCC BAA-588 / NCTC 13252 / RB50) (Alcaligenes bronchisepticus).